The following is a 204-amino-acid chain: Protein C (204 aa).

Positions 1 to 78 (MPSFLRGILK…TEQSQRRPKI (78 aa)) are disordered. The span at 10–20 (KPKERHHENKN) shows a compositional bias: basic and acidic residues. A compositionally biased stretch (low complexity) spans 25–34 (SSDSLTSSYP).

This sequence belongs to the respirovirus protein C family.

The polypeptide is Protein C (P/V/C) (Homo sapiens (Human)).